We begin with the raw amino-acid sequence, 500 residues long: Cytochrome P450 71B36 (500 aa).

Residues Met-1–Thr-21 form a helical membrane-spanning segment. Cys-440 is a heme binding site.

The protein belongs to the cytochrome P450 family. Heme is required as a cofactor.

The protein resides in the membrane. This is Cytochrome P450 71B36 (CYP71B36) from Arabidopsis thaliana (Mouse-ear cress).